A 100-amino-acid polypeptide reads, in one-letter code: Urease subunit gamma (100 aa).

It belongs to the urease gamma subunit family. In terms of assembly, heterotrimer of UreA (gamma), UreB (beta) and UreC (alpha) subunits. Three heterotrimers associate to form the active enzyme.

It is found in the cytoplasm. It carries out the reaction urea + 2 H2O + H(+) = hydrogencarbonate + 2 NH4(+). Its pathway is nitrogen metabolism; urea degradation; CO(2) and NH(3) from urea (urease route): step 1/1. The chain is Urease subunit gamma from Picosynechococcus sp. (strain ATCC 27264 / PCC 7002 / PR-6) (Agmenellum quadruplicatum).